The following is a 362-amino-acid chain: Cobalt-precorrin-5B C(1)-methyltransferase (362 aa).

It belongs to the CbiD family.

The catalysed reaction is Co-precorrin-5B + S-adenosyl-L-methionine = Co-precorrin-6A + S-adenosyl-L-homocysteine. It participates in cofactor biosynthesis; adenosylcobalamin biosynthesis; cob(II)yrinate a,c-diamide from sirohydrochlorin (anaerobic route): step 6/10. In terms of biological role, catalyzes the methylation of C-1 in cobalt-precorrin-5B to form cobalt-precorrin-6A. The chain is Cobalt-precorrin-5B C(1)-methyltransferase from Geobacter sulfurreducens (strain ATCC 51573 / DSM 12127 / PCA).